We begin with the raw amino-acid sequence, 310 residues long: Mitogen-activated protein kinase kinase 9 (310 aa).

One can recognise a Protein kinase domain in the interval 47–306 (LEKLNVLGCG…APQLLAHPFL (260 aa)). ATP is bound by residues 53-61 (LGCGNGGIV) and Lys76. Asp167 serves as the catalytic Proton acceptor. 2 positions are modified to phosphoserine: Ser195 and Ser201. Position 205 is a phosphothreonine (Thr205).

The protein belongs to the protein kinase superfamily. STE Ser/Thr protein kinase family. MAP kinase kinase subfamily. Phosphorylation at Ser-195 and Ser-201 by MAP kinase kinase kinases positively regulates kinase activity. Autophosphorylated.

The protein localises to the cytoplasm. The protein resides in the nucleus. The enzyme catalyses L-seryl-[protein] + ATP = O-phospho-L-seryl-[protein] + ADP + H(+). It carries out the reaction L-threonyl-[protein] + ATP = O-phospho-L-threonyl-[protein] + ADP + H(+). It catalyses the reaction L-tyrosyl-[protein] + ATP = O-phospho-L-tyrosyl-[protein] + ADP + H(+). In terms of biological role, MKK9-MPK3/MPK6 module phosphorylates and activates EIN3, leading to the promotion of EIN3-mediated transcription in ethylene signaling. Autophosphorylates and also phosphorylates MPK3 and MPK6. Plays an important role in ethylene and camalexin biosynthesis and in salt stress response. MKK9-MPK6 module positively regulates leaf senescence. This chain is Mitogen-activated protein kinase kinase 9 (MKK9), found in Arabidopsis thaliana (Mouse-ear cress).